The sequence spans 470 residues: MELNTKKKLHALSLAEKIQVLELLDESKMSQSEVARRFQVSQPQISRICKNKEKLLADWCSGTANHERKRKRESKYSGIDEALLCWYHIARAKAWDVTGPMLLHKAKELADIMGQDFVPSIGWLVRWKRRNNVGFGTRQVLVPLFPPEAPPAVLPSQAQPPLSLKDFSPEDVFGCAEVPLLYRAVPGRVFECDRLQVLLCANSRGTEKRRVFVGGLQAAPRCFFGVSSEALPTSYHPDLAIPWSEWLAQFDQDMGQQGRQVALLLASGVVEEWASLPGLHHVRLLPLSASSTTPSLPGSVILAFKAHYRHRLLSKLAAMQSGKEGTSLAEARASITVLDALHMVAAAWAKVPRQLILSSFVQEGLAPGKTPLSLDKDTEMSPVPSGLSQEEFSHFVDLEDEDPGPRVCKEETGTEDSGREEDGFEPLPTKADALQALCTLRRWLECNSASPELFEKFYDCEVEVEQLCCL.

The 53-residue stretch at 3-55 (LNTKKKLHALSLAEKIQVLELLDESKMSQSEVARRFQVSQPQISRICKNKEKL) folds into the HTH psq-type domain. 2 DNA-binding regions (H-T-H motif) span residues 31 to 51 (QSEVARRFQVSQPQISRICKN) and 100 to 130 (PMLLHKAKELADIMGQDFVPSIGWLVRWKRR). An HTH CENPB-type domain is found at 67 to 137 (ERKRKRESKY…KRRNNVGFGT (71 aa)). The region spanning 167 to 360 (FSPEDVFGCA…VPRQLILSSF (194 aa)) is the DDE-1 domain. Over residues 402–421 (DPGPRVCKEETGTEDSGREE) the composition is skewed to basic and acidic residues. The segment at 402–426 (DPGPRVCKEETGTEDSGREEDGFEP) is disordered.

This sequence belongs to the tigger transposable element derived protein family.

The protein localises to the nucleus. In Mus musculus (Mouse), this protein is Tigger transposable element-derived protein 3 (Tigd3).